Reading from the N-terminus, the 233-residue chain is Small ribosomal subunit protein uS2 (233 aa).

This sequence belongs to the universal ribosomal protein uS2 family.

In Bacillus cytotoxicus (strain DSM 22905 / CIP 110041 / 391-98 / NVH 391-98), this protein is Small ribosomal subunit protein uS2.